The primary structure comprises 507 residues: ATP synthase subunit alpha, chloroplastic (507 aa).

170-177 (GDRQTGKT) contacts ATP. T257 is modified (phosphothreonine).

This sequence belongs to the ATPase alpha/beta chains family. F-type ATPases have 2 components, CF(1) - the catalytic core - and CF(0) - the membrane proton channel. CF(1) has five subunits: alpha(3), beta(3), gamma(1), delta(1), epsilon(1). CF(0) has four main subunits: a, b, b' and c.

It is found in the plastid. It localises to the chloroplast thylakoid membrane. The enzyme catalyses ATP + H2O + 4 H(+)(in) = ADP + phosphate + 5 H(+)(out). Produces ATP from ADP in the presence of a proton gradient across the membrane. The alpha chain is a regulatory subunit. The chain is ATP synthase subunit alpha, chloroplastic from Capsella bursa-pastoris (Shepherd's purse).